Consider the following 119-residue polypeptide: MNLAAYYPVLLFLLVGTGLGIALVSIGKLLGPNKPDVDKNAPYECGFEAFEDARMKFDVRYYLVAILFIIFDLETAFLFPWGVALRDIGWPGFSAMMIFLLEFLLGFAYIWKKGGLDWE.

Helical transmembrane passes span 7–27 (YPVLLFLLVGTGLGIALVSIG), 63–83 (LVAILFIIFDLETAFLFPWGV), and 88–108 (IGWPGFSAMMIFLLEFLLGFA).

This sequence belongs to the complex I subunit 3 family. NDH-1 is composed of 14 different subunits. Subunits NuoA, H, J, K, L, M, N constitute the membrane sector of the complex.

Its subcellular location is the cell inner membrane. It catalyses the reaction a quinone + NADH + 5 H(+)(in) = a quinol + NAD(+) + 4 H(+)(out). Its function is as follows. NDH-1 shuttles electrons from NADH, via FMN and iron-sulfur (Fe-S) centers, to quinones in the respiratory chain. The immediate electron acceptor for the enzyme in this species is believed to be ubiquinone. Couples the redox reaction to proton translocation (for every two electrons transferred, four hydrogen ions are translocated across the cytoplasmic membrane), and thus conserves the redox energy in a proton gradient. This is NADH-quinone oxidoreductase subunit A from Burkholderia vietnamiensis (strain G4 / LMG 22486) (Burkholderia cepacia (strain R1808)).